A 207-amino-acid polypeptide reads, in one-letter code: Dephospho-CoA kinase (207 aa).

The DPCK domain occupies 5 to 203 (AVGLTGGVAC…ARYRALASVF (199 aa)). 13–18 (ACGKSL) provides a ligand contact to ATP.

It belongs to the CoaE family.

The protein localises to the cytoplasm. It carries out the reaction 3'-dephospho-CoA + ATP = ADP + CoA + H(+). The protein operates within cofactor biosynthesis; coenzyme A biosynthesis; CoA from (R)-pantothenate: step 5/5. Catalyzes the phosphorylation of the 3'-hydroxyl group of dephosphocoenzyme A to form coenzyme A. This is Dephospho-CoA kinase from Xylella fastidiosa (strain Temecula1 / ATCC 700964).